A 230-amino-acid polypeptide reads, in one-letter code: Aspartate and serine-rich protein (230 aa).

N-linked (GlcNAc...) asparagine glycosylation is found at N17, N132, and N139. The disordered stretch occupies residues 112–230 (LNGGATAGGV…DSDSNDTDSD (119 aa)). Residues 126 to 140 (DTDESSNDTDEDSND) show a composition bias toward acidic residues. The segment covering 141–161 (SDSKDTDSDSKDTDSDSKDSD) has biased composition (basic and acidic residues). N-linked (GlcNAc...) asparagine glycans are attached at residues N163 and N170. The segment covering 173–223 (DSKDTDSDSKDSDSKDTDSDSKDTDSDSKDSDSKDTDSDSKDTDSDSKDSD) has biased composition (basic and acidic residues). N225 carries N-linked (GlcNAc...) asparagine glycosylation.

As to expression, component of the acid-insoluble organic matrix of calcified layers of the shell (at protein level).

It localises to the secreted. The protein is Aspartate and serine-rich protein of Lottia gigantea (Giant owl limpet).